Consider the following 166-residue polypeptide: MLMPKKNRIAIYELLFKEGVMVAKKDVHLAKHPELADKNVPNLHVMKAMQSLKSCGYVKEQFAWRHFYWYLTNEGIQYLRDFLHLPPEIVPATLRRQTRPETARPRPKGLEGERPARLARGEGDRDAYRRSAAPPGADKKAEAGAGAATEFQFRGGFGRGRGQQPQ.

Residues 95 to 166 (RRQTRPETAR…FGRGRGQQPQ (72 aa)) are disordered. Residues 98–129 (TRPETARPRPKGLEGERPARLARGEGDRDAYR) show a composition bias toward basic and acidic residues. Over residues 143–154 (AGAGAATEFQFR) the composition is skewed to low complexity. Positions 155-166 (GGFGRGRGQQPQ) are enriched in gly residues.

Belongs to the eukaryotic ribosomal protein eS10 family. As to quaternary structure, component of the small ribosomal subunit.

The protein resides in the cytoplasm. Its subcellular location is the nucleus. It is found in the nucleolus. Component of the 40S ribosomal subunit. The ribosome is a large ribonucleoprotein complex responsible for the synthesis of proteins in the cell. The chain is Small ribosomal subunit protein eS10 (rps10) from Ictalurus punctatus (Channel catfish).